A 440-amino-acid chain; its full sequence is Rhamnogalacturonase A (440 aa).

Positions 1–18 (MRALFLLALGSIPALVSG) are cleaved as a signal peptide. Cysteines 39 and 65 form a disulfide. N50 is a glycosylation site (N-linked (GlcNAc...) asparagine). D215 functions as the Proton donor in the catalytic mechanism. A disulfide bridge links C217 with C234. Residue H290 is part of the active site. N-linked (GlcNAc...) asparagine glycosylation occurs at N317. 2 cysteine pairs are disulfide-bonded: C340/C346 and C368/C377. O-linked (Man) threonine glycosylation occurs at T385. O-linked (Man) serine glycosylation is present at S386. O-linked (Man) threonine glycosylation is found at T388, T389, and T390. An O-linked (Man) serine glycan is attached at S391. O-linked (Man) threonine glycans are attached at residues T392 and T394. O-linked (Man) serine glycosylation is found at S398 and S401. T403, T404, and T416 each carry an O-linked (Man) threonine glycan. Residue S418 is glycosylated (O-linked (Man) serine). 2 O-linked (Man) threonine glycosylation sites follow: T423 and T426. Residues S427 and S436 are each glycosylated (O-linked (Man) serine).

It belongs to the glycosyl hydrolase 28 family. The N-terminus is blocked. Post-translationally, N-glycosylated and may also be O-glycosylated.

Its subcellular location is the secreted. The enzyme catalyses Endohydrolysis of alpha-D-GalA-(1-&gt;2)-alpha-L-Rha glycosidic bond in the rhamnogalacturonan I backbone with initial inversion of anomeric configuration releasing oligosaccharides with beta-D-GalA at the reducing end.. In terms of biological role, pectinolytic enzymes consist of four classes of enzymes: pectine lyase, polygalacturonase, pectin methylesterase and rhamnogalacturonase. Has a positive effect in the apple hot-mash liquefaction process. Hydrolyzes alpha-D-galacturonopyranosyl-(1,2)-alpha-L-rhamnopyranosyl linkages in the backbone of the hairy regions of pectins. The polypeptide is Rhamnogalacturonase A (rhgA) (Aspergillus aculeatus).